Here is a 266-residue protein sequence, read N- to C-terminus: Undecaprenyl-diphosphatase (266 aa).

The next 7 membrane-spanning stretches (helical) occupy residues 41-61, 82-102, 106-126, 140-160, 180-200, 213-233, and 245-265; these read NLAFTIVVHVATVFSTLVILW, YVINILISMLPIGIVGVFFKD, AIFGSGLLIVGCMLLLTAALL, ISMKDAFIIGLAQACAVLPGL, LAQFSFLMVIPPILGEALLDG, IPTLSLIVGFIAAFVSGCLAC, and LIYFAIYCAIVGVVTIVVSQL.

This sequence belongs to the UppP family.

Its subcellular location is the cell inner membrane. It catalyses the reaction di-trans,octa-cis-undecaprenyl diphosphate + H2O = di-trans,octa-cis-undecaprenyl phosphate + phosphate + H(+). Functionally, catalyzes the dephosphorylation of undecaprenyl diphosphate (UPP). Confers resistance to bacitracin. In Bacteroides fragilis (strain YCH46), this protein is Undecaprenyl-diphosphatase.